A 185-amino-acid chain; its full sequence is Ribosome-recycling factor (185 aa).

Residues 142 to 165 (IVKDGDAGEDEGSRAEKELDGLTK) form a disordered region.

It belongs to the RRF family.

It localises to the cytoplasm. Functionally, responsible for the release of ribosomes from messenger RNA at the termination of protein biosynthesis. May increase the efficiency of translation by recycling ribosomes from one round of translation to another. This is Ribosome-recycling factor from Renibacterium salmoninarum (strain ATCC 33209 / DSM 20767 / JCM 11484 / NBRC 15589 / NCIMB 2235).